The following is a 205-amino-acid chain: Anaerobic dimethyl sulfoxide reductase chain B (205 aa).

4Fe-4S ferredoxin-type domains are found at residues 5–33 (YGFF…LTPE), 59–89 (FAYY…KRED), and 90–119 (GFVV…YNET). 16 residues coordinate [4Fe-4S] cluster: cysteine 14, cysteine 17, cysteine 20, cysteine 24, cysteine 67, cysteine 70, cysteine 75, cysteine 79, cysteine 99, cysteine 102, cysteine 105, cysteine 109, cysteine 126, cysteine 129, cysteine 141, and cysteine 145. The tract at residues 184 to 205 (KPNANSRPTGDTTGYLANPKEV) is disordered. A compositionally biased stretch (polar residues) spans 186–195 (NANSRPTGDT).

As to quaternary structure, heterotrimeric enzyme composed of a catalytic heterodimer (DmsAB) and a membrane anchor protein (DmsC). [4Fe-4S] cluster serves as cofactor.

Functionally, electron transfer subunit of the terminal reductase during anaerobic growth on various sulfoxide and N-oxide compounds. The polypeptide is Anaerobic dimethyl sulfoxide reductase chain B (dmsB) (Shigella flexneri).